We begin with the raw amino-acid sequence, 294 residues long: 4-hydroxy-tetrahydrodipicolinate synthase (294 aa).

Threonine 44 serves as a coordination point for pyruvate. Tyrosine 132 (proton donor/acceptor) is an active-site residue. Lysine 161 acts as the Schiff-base intermediate with substrate in catalysis. A pyruvate-binding site is contributed by isoleucine 206.

This sequence belongs to the DapA family. Homotetramer; dimer of dimers.

The protein resides in the cytoplasm. It catalyses the reaction L-aspartate 4-semialdehyde + pyruvate = (2S,4S)-4-hydroxy-2,3,4,5-tetrahydrodipicolinate + H2O + H(+). Its pathway is amino-acid biosynthesis; L-lysine biosynthesis via DAP pathway; (S)-tetrahydrodipicolinate from L-aspartate: step 3/4. Functionally, catalyzes the condensation of (S)-aspartate-beta-semialdehyde [(S)-ASA] and pyruvate to 4-hydroxy-tetrahydrodipicolinate (HTPA). The sequence is that of 4-hydroxy-tetrahydrodipicolinate synthase from Thermotoga sp. (strain RQ2).